We begin with the raw amino-acid sequence, 437 residues long: tRNA-2-methylthio-N(6)-dimethylallyladenosine synthase (437 aa).

Positions 1–117 (MKFYIKTFGC…LPNLLEEAKS (117 aa)) constitute an MTTase N-terminal domain. 6 residues coordinate [4Fe-4S] cluster: cysteine 10, cysteine 46, cysteine 80, cysteine 156, cysteine 160, and cysteine 163. The Radical SAM core domain occupies 142-371 (RENKYTAFVT…INLQKDITFK (230 aa)). Residues 374–435 (LEYQDKIVEI…RFSLEGSIIG (62 aa)) enclose the TRAM domain.

Belongs to the methylthiotransferase family. MiaB subfamily. Monomer. [4Fe-4S] cluster serves as cofactor.

It is found in the cytoplasm. It carries out the reaction N(6)-dimethylallyladenosine(37) in tRNA + (sulfur carrier)-SH + AH2 + 2 S-adenosyl-L-methionine = 2-methylsulfanyl-N(6)-dimethylallyladenosine(37) in tRNA + (sulfur carrier)-H + 5'-deoxyadenosine + L-methionine + A + S-adenosyl-L-homocysteine + 2 H(+). Its function is as follows. Catalyzes the methylthiolation of N6-(dimethylallyl)adenosine (i(6)A), leading to the formation of 2-methylthio-N6-(dimethylallyl)adenosine (ms(2)i(6)A) at position 37 in tRNAs that read codons beginning with uridine. The sequence is that of tRNA-2-methylthio-N(6)-dimethylallyladenosine synthase from Sulfurihydrogenibium sp. (strain YO3AOP1).